Consider the following 964-residue polypeptide: uncharacterized protein (964 aa).

Disordered stretches follow at residues 1-31 and 169-199; these read MDSETDTDTHSICNSVSSGENYKSPESSDCE and EETYSEEDERQTPIQMENATSEVSSSEDEIS. Over residues 10–27 the composition is skewed to polar residues; sequence HSICNSVSSGENYKSPES. Residues 656 to 840 are a coiled coil; sequence EVMESLQVEI…LILNQTSMAK (185 aa).

This is an uncharacterized protein from Caenorhabditis elegans.